A 476-amino-acid polypeptide reads, in one-letter code: MTLRIYNTLTKQKEEFKPINEGEVRMYVCGPTVYDYPHLGHARTYIAFDVIRRYLEHKGYSVLMVMNFTDIDDKIIRRAKETGEDPAKLAEKFIKVFLEDMKALKVKPADIYPRVTEHIEDIIQFIERLKEKGYAYEGSDGVYFEVQKFKEYGKLSGVKLEELRKGARVEPGEGKKNPEDFALWKKAKPGEPKWESPWGEGRPGWHIECSVMSSKYLGESFDIHGGGNDLIFPHHENEIAQSEACFGHEWVHYWLHTGFVMVKGEKMSKSLGNFVTVRELLQRYSPEVIRFFVLQKHYRSPLDYSEEGLQHAKNNLERLYNTLENIRIAMENAELAYTWDENDFKAYNSIKEARRKFYEAMDDDFNTAEALKAVFEVSNAINKYITEAEKPKESVLRKAWEFFRTVGEIFGIFEEYFKEEKAKEEEKLIELLIQVRAELRKERKFELADKIREELRKLGIQLEDKGKETIWKRIKV.

Cysteine 29 lines the Zn(2+) pocket. Residues 31-41 carry the 'HIGH' region motif; it reads PTVYDYPHLGH. Positions 209, 234, and 238 each coordinate Zn(2+). Positions 266-270 match the 'KMSKS' region motif; that stretch reads KMSKS. Lysine 269 lines the ATP pocket.

Belongs to the class-I aminoacyl-tRNA synthetase family. The cofactor is Zn(2+).

The protein localises to the cytoplasm. It catalyses the reaction tRNA(Cys) + L-cysteine + ATP = L-cysteinyl-tRNA(Cys) + AMP + diphosphate. The chain is Cysteine--tRNA ligase (cysS) from Pyrococcus horikoshii (strain ATCC 700860 / DSM 12428 / JCM 9974 / NBRC 100139 / OT-3).